A 229-amino-acid chain; its full sequence is Orotidine 5'-phosphate decarboxylase (229 aa).

Substrate contacts are provided by residues Asp11, Lys33, 61 to 70, Thr116, Arg179, Gln188, Gly208, and Arg209; that span reads DMKLFDISAT. Lys63 (proton donor) is an active-site residue.

Belongs to the OMP decarboxylase family. Type 1 subfamily. As to quaternary structure, homodimer.

The catalysed reaction is orotidine 5'-phosphate + H(+) = UMP + CO2. Its pathway is pyrimidine metabolism; UMP biosynthesis via de novo pathway; UMP from orotate: step 2/2. Functionally, catalyzes the decarboxylation of orotidine 5'-monophosphate (OMP) to uridine 5'-monophosphate (UMP). The sequence is that of Orotidine 5'-phosphate decarboxylase from Jannaschia sp. (strain CCS1).